Consider the following 360-residue polypeptide: Phosphoserine aminotransferase (360 aa).

Position 41 (Arg-41) interacts with L-glutamate. Pyridoxal 5'-phosphate contacts are provided by residues 75–76 (GR), Trp-101, Thr-152, Asp-172, and Gln-195. An N6-(pyridoxal phosphate)lysine modification is found at Lys-196. A pyridoxal 5'-phosphate-binding site is contributed by 237 to 238 (NT).

This sequence belongs to the class-V pyridoxal-phosphate-dependent aminotransferase family. SerC subfamily. Homodimer. Pyridoxal 5'-phosphate serves as cofactor.

Its subcellular location is the cytoplasm. It carries out the reaction O-phospho-L-serine + 2-oxoglutarate = 3-phosphooxypyruvate + L-glutamate. It catalyses the reaction 4-(phosphooxy)-L-threonine + 2-oxoglutarate = (R)-3-hydroxy-2-oxo-4-phosphooxybutanoate + L-glutamate. It functions in the pathway amino-acid biosynthesis; L-serine biosynthesis; L-serine from 3-phospho-D-glycerate: step 2/3. Its pathway is cofactor biosynthesis; pyridoxine 5'-phosphate biosynthesis; pyridoxine 5'-phosphate from D-erythrose 4-phosphate: step 3/5. Its function is as follows. Catalyzes the reversible conversion of 3-phosphohydroxypyruvate to phosphoserine and of 3-hydroxy-2-oxo-4-phosphonooxybutanoate to phosphohydroxythreonine. This chain is Phosphoserine aminotransferase, found in Pseudoalteromonas translucida (strain TAC 125).